The chain runs to 400 residues: Diphosphomevalonate decarboxylase (400 aa).

Residues 19-22, Arg75, 154-159, and Thr210 each bind (R)-5-diphosphomevalonate; these read YWGK and SGSACR. The tract at residues 381 to 400 is disordered; that stretch reads DGPRTLGPEEALLSPDGLPK.

The protein belongs to the diphosphomevalonate decarboxylase family.

The enzyme catalyses (R)-5-diphosphomevalonate + ATP = isopentenyl diphosphate + ADP + phosphate + CO2. Its pathway is isoprenoid biosynthesis; isopentenyl diphosphate biosynthesis via mevalonate pathway; isopentenyl diphosphate from (R)-mevalonate: step 3/3. Diphosphomevalonate decarboxylase; part of the second module of ergosterol biosynthesis pathway that includes the middle steps of the pathway. The second module involves the formation of farnesyl diphosphate, which is also an important intermediate in the biosynthesis of ubiquinone, dolichol, heme and prenylated proteins. This module also plays a key role in the biosynthesis of triterpenes such as ganoderic acids (GA), a group of highly oxygenated lanostane-type triterpenoids which are well recognized as a main group of unique bioactive compounds in the medicinal mushroom Ganoderma lucidum. Activity by the mevalonate kinase first converts mevalonate into 5-phosphomevalonate. 5-phosphomevalonate is then further converted to 5-diphosphomevalonate by the phosphomevalonate kinase. The diphosphomevalonate decarboxylase MVD then produces isopentenyl diphosphate. The isopentenyl-diphosphate delta-isomerase then catalyzes the 1,3-allylic rearrangement of the homoallylic substrate isopentenyl (IPP) to its highly electrophilic allylic isomer, dimethylallyl diphosphate (DMAPP). Finally the farnesyl diphosphate synthase FPS catalyzes the sequential condensation of isopentenyl pyrophosphate with dimethylallyl pyrophosphate, and then with the resultant geranylpyrophosphate to the ultimate product farnesyl pyrophosphate. This Ganoderma lucidum (Ling zhi medicinal fungus) protein is Diphosphomevalonate decarboxylase.